We begin with the raw amino-acid sequence, 209 residues long: Large ribosomal subunit protein uL3 (209 aa).

Over residues 112–122 the composition is skewed to polar residues; sequence GTTRGHGTQGN. Positions 112–146 are disordered; the sequence is GTTRGHGTQGNIKRWGQSRGPETHGSRYHRIPGSM.

It belongs to the universal ribosomal protein uL3 family. As to quaternary structure, part of the 50S ribosomal subunit. Forms a cluster with proteins L14 and L19.

Functionally, one of the primary rRNA binding proteins, it binds directly near the 3'-end of the 23S rRNA, where it nucleates assembly of the 50S subunit. The chain is Large ribosomal subunit protein uL3 from Lactobacillus gasseri (strain ATCC 33323 / DSM 20243 / BCRC 14619 / CIP 102991 / JCM 1131 / KCTC 3163 / NCIMB 11718 / NCTC 13722 / AM63).